A 411-amino-acid polypeptide reads, in one-letter code: Bifunctional protein GlmU (411 aa).

The interval M1–N204 is pyrophosphorylase. Residues L6–G9, Q74, and G79 contribute to the UTP site. N-acetyl-alpha-D-glucosamine 1-phosphate contacts are provided by T80, G132, E144, and N158. The interval G205–L224 is linker. The N-acetyltransferase stretch occupies residues K225–K411. Residue H308 is the Proton acceptor of the active site. Residues A384 and K401 each coordinate acetyl-CoA.

In the N-terminal section; belongs to the N-acetylglucosamine-1-phosphate uridyltransferase family. It in the C-terminal section; belongs to the transferase hexapeptide repeat family.

The catalysed reaction is N-acetyl-alpha-D-glucosamine 1-phosphate + UTP + H(+) = UDP-N-acetyl-alpha-D-glucosamine + diphosphate. It carries out the reaction alpha-D-glucosamine 1-phosphate + acetyl-CoA = N-acetyl-alpha-D-glucosamine 1-phosphate + CoA + H(+). It participates in nucleotide-sugar biosynthesis; UDP-N-acetyl-alpha-D-glucosamine biosynthesis; N-acetyl-alpha-D-glucosamine 1-phosphate from alpha-D-glucosamine 6-phosphate (route II): step 2/2. The protein operates within nucleotide-sugar biosynthesis; UDP-N-acetyl-alpha-D-glucosamine biosynthesis; UDP-N-acetyl-alpha-D-glucosamine from N-acetyl-alpha-D-glucosamine 1-phosphate: step 1/1. Its function is as follows. Catalyzes the last two sequential reactions in the de novo biosynthetic pathway for UDP-N-acetyl-glucosamine (UDP-GlcNAc). Responsible for the acetylation of GlcN-1-P to GlcNAc-1-P, and for the uridyl transfer from UTP to GlcNAc-1-P, to produce UDP-GlcNAc and pyrophosphate. The sequence is that of Bifunctional protein GlmU from Methanococcus aeolicus (strain ATCC BAA-1280 / DSM 17508 / OCM 812 / Nankai-3).